An 88-amino-acid chain; its full sequence is Small ribosomal subunit protein bS20 (88 aa).

The protein belongs to the bacterial ribosomal protein bS20 family.

Its function is as follows. Binds directly to 16S ribosomal RNA. The protein is Small ribosomal subunit protein bS20 of Rhodopseudomonas palustris (strain BisA53).